A 1752-amino-acid chain; its full sequence is Serine protease/ABC transporter B family protein tagA (1752 aa).

The signal sequence occupies residues 1–24 (MNKKLFIFGLSLFLFLFIFNLSLS). Residue Asn20 is glycosylated (N-linked (GlcNAc...) asparagine). The region spanning 280–696 (HYSIQSGSAS…FGNIQLSKLI (417 aa)) is the Peptidase S8 domain. Residues Asp312 and His352 each act as charge relay system in the active site. 2 N-linked (GlcNAc...) asparagine glycosylation sites follow: Asn400 and Asn557. The active-site Charge relay system is Ser625. 3 N-linked (GlcNAc...) asparagine glycosylation sites follow: Asn653, Asn785, and Asn823. Residues 909-929 (IVLLGIFGIIIVGAVIFVLVC) traverse the membrane as a helical segment. Residues 946–1032 (DKGGDGNSIR…QNNSPQYDED (87 aa)) are disordered. Positions 962-994 (NNNNNNNNNNNNNNNNNNNNNNNNNNNNNNNNN) are enriched in low complexity. N-linked (GlcNAc...) asparagine glycosylation is present at Asn993. A compositionally biased stretch (polar residues) spans 995–1004 (SNGKQSNIEL). Residues 1013 to 1028 (GTPNGDDQQQQNNSPQ) are compositionally biased toward low complexity. 6 helical membrane-spanning segments follow: residues 1058–1078 (ILGLALFLSFIDVALGLAVPL), 1102–1122 (FALIIIGMIIVQFLSGILLAL), 1174–1194 (IPHMIIQIATIGGTLIMLFII), 1200–1220 (LVVLCPLPILLVFSKFYGGYI), 1285–1305 (TSGIFEQLSVFILLWYGSSLV), and 1315–1335 (LIAFNLFLPFITGAVTQVASL). The 283-residue stretch at 1059–1341 (LGLALFLSFI…VASLYTTYKS (283 aa)) folds into the ABC transmembrane type-1 domain. One can recognise an ABC transporter domain in the interval 1374–1610 (IQFNKVSFAY…KGMFYDFVQI (237 aa)). 1409 to 1416 (GPSGGGKS) lines the ATP pocket. A disordered region spans residues 1621–1686 (IQLPSNSRNT…SRSPPPMWRQ (66 aa)). Basic and acidic residues predominate over residues 1631 to 1642 (RNADKLRNRSET). Asn1638, Asn1670, and Asn1694 each carry an N-linked (GlcNAc...) asparagine glycan.

It in the C-terminal section; belongs to the ABC transporter superfamily. ABCB family. Multidrug resistance exporter (TC 3.A.1.201) subfamily. This sequence in the N-terminal section; belongs to the peptidase S8 family.

It localises to the membrane. Its function is as follows. Required for a general cell fate determination at the onset of development. Required for the specification of an initial population of prespore cells in which tagA is expressed. Required for normal SDF-2 signaling during spore encapsulation. This chain is Serine protease/ABC transporter B family protein tagA (tagA), found in Dictyostelium discoideum (Social amoeba).